The following is a 699-amino-acid chain: Elongation factor G (699 aa).

Residues 8–283 form the tr-type G domain; that stretch reads EHIRNIGICA…AVVDFLPSPI (276 aa). GTP-binding positions include 17 to 24, 81 to 85, and 135 to 138; these read AHIDAGKT, DTPGH, and NKMD.

This sequence belongs to the TRAFAC class translation factor GTPase superfamily. Classic translation factor GTPase family. EF-G/EF-2 subfamily.

The protein resides in the cytoplasm. Functionally, catalyzes the GTP-dependent ribosomal translocation step during translation elongation. During this step, the ribosome changes from the pre-translocational (PRE) to the post-translocational (POST) state as the newly formed A-site-bound peptidyl-tRNA and P-site-bound deacylated tRNA move to the P and E sites, respectively. Catalyzes the coordinated movement of the two tRNA molecules, the mRNA and conformational changes in the ribosome. This is Elongation factor G from Rickettsia sibirica (strain ATCC VR-151 / 246).